The following is a 530-amino-acid chain: Chaperone Ric-8A (530 aa).

Position 435 is a phosphoserine (Ser-435). A phosphothreonine mark is found at Thr-440 and Thr-442. Phosphoserine is present on residues Ser-501, Ser-522, Ser-523, and Ser-527.

The protein belongs to the synembryn family. Interacts with GDP-bound G alpha proteins GNAI1, GNAO1 and GNAQ, and with GNA13 with lower affinity. Does not interact with G-alpha proteins when they are in complex with subunits beta and gamma. Interacts (via C-terminus) with RGS14; the interaction stimulates the dissociation of the complex between RGS14 and the active GTP-bound form of GNAI1. Interacts with NCS1; interaction is favored in the absence of Ca(2+) and myristoylation of NCS1 is not required. Expressed in neurons and neurites of the CA1 and CA2 subregions of the hippocampus (at protein level). In adult brain, it is expressed in the neocortex, hippocampus and cerebellum as well as in the pineal gland and ependymal layer.

It is found in the cytoplasm. Its subcellular location is the cell cortex. Its function is as follows. Chaperone that specifically binds and folds nascent G alpha proteins prior to G protein heterotrimer formation, promoting their stability and activity: folds GNAI1, GNAO1, GNA13 and GNAQ. Does not fold G(s) G-alpha proteins GNAS nor GNAL. Also acts as a guanine nucleotide exchange factor (GEF) for G alpha proteins by stimulating exchange of bound GDP for free GTP. Involved in regulation of microtubule pulling forces during mitotic movement of chromosomes by stimulating G(i)-alpha protein (GNAI1), possibly leading to release G(i)-alpha-GTP and NuMA proteins from the NuMA-GPSM2-G(i)-alpha-GDP complex. Also acts as an activator for G(q)-alpha (GNAQ) protein by enhancing the G(q)-coupled receptor-mediated ERK activation. This chain is Chaperone Ric-8A, found in Mus musculus (Mouse).